Here is a 408-residue protein sequence, read N- to C-terminus: LL-diaminopimelate aminotransferase (408 aa).

Tyr15 and Gly42 together coordinate substrate. Residues Tyr72, 108–109, Tyr132, Asn187, Tyr218, and 246–248 contribute to the pyridoxal 5'-phosphate site; these read SK and SFS. Residues Lys109, Tyr132, and Asn187 each contribute to the substrate site. An N6-(pyridoxal phosphate)lysine modification is found at Lys249. Positions 257 and 292 each coordinate pyridoxal 5'-phosphate. Residues Asn292 and Arg388 each coordinate substrate.

This sequence belongs to the class-I pyridoxal-phosphate-dependent aminotransferase family. LL-diaminopimelate aminotransferase subfamily. In terms of assembly, homodimer. Requires pyridoxal 5'-phosphate as cofactor.

It catalyses the reaction (2S,6S)-2,6-diaminopimelate + 2-oxoglutarate = (S)-2,3,4,5-tetrahydrodipicolinate + L-glutamate + H2O + H(+). It participates in amino-acid biosynthesis; L-lysine biosynthesis via DAP pathway; LL-2,6-diaminopimelate from (S)-tetrahydrodipicolinate (aminotransferase route): step 1/1. Involved in the synthesis of meso-diaminopimelate (m-DAP or DL-DAP), required for both lysine and peptidoglycan biosynthesis. Catalyzes the direct conversion of tetrahydrodipicolinate to LL-diaminopimelate. The polypeptide is LL-diaminopimelate aminotransferase (Leptospira biflexa serovar Patoc (strain Patoc 1 / Ames)).